The following is a 208-amino-acid chain: N-(5'-phosphoribosyl)anthranilate isomerase (208 aa).

Belongs to the TrpF family.

The enzyme catalyses N-(5-phospho-beta-D-ribosyl)anthranilate = 1-(2-carboxyphenylamino)-1-deoxy-D-ribulose 5-phosphate. It participates in amino-acid biosynthesis; L-tryptophan biosynthesis; L-tryptophan from chorismate: step 3/5. The sequence is that of N-(5'-phosphoribosyl)anthranilate isomerase from Dechloromonas aromatica (strain RCB).